The primary structure comprises 936 residues: Protein translocase subunit SecA (936 aa).

Residues Gln87, 105 to 109 (GEGKT), and Asp515 contribute to the ATP site. Zn(2+)-binding residues include Cys920, Cys922, Cys931, and His932.

This sequence belongs to the SecA family. In terms of assembly, monomer and homodimer. Part of the essential Sec protein translocation apparatus which comprises SecA, SecYEG and auxiliary proteins SecDF-YajC and YidC. Requires Zn(2+) as cofactor.

The protein resides in the cell inner membrane. Its subcellular location is the cytoplasm. It catalyses the reaction ATP + H2O + cellular proteinSide 1 = ADP + phosphate + cellular proteinSide 2.. Its function is as follows. Part of the Sec protein translocase complex. Interacts with the SecYEG preprotein conducting channel. Has a central role in coupling the hydrolysis of ATP to the transfer of proteins into and across the cell membrane, serving both as a receptor for the preprotein-SecB complex and as an ATP-driven molecular motor driving the stepwise translocation of polypeptide chains across the membrane. The sequence is that of Protein translocase subunit SecA from Paraburkholderia xenovorans (strain LB400).